Reading from the N-terminus, the 1437-residue chain is Myomesin-3 (1437 aa).

The tract at residues 1 to 49 (MTLPHSLGGAGDPRPPQAMEVHRLEHRQEEEQKEERQHSLRMGSSVRRR) is disordered. The segment covering 20 to 38 (EVHRLEHRQEEEQKEERQH) has biased composition (basic and acidic residues). Residues 120 to 149 (RLLRQRRDWKTLRRRTEEKVQEAKELRELC) adopt a coiled-coil conformation. 2 consecutive Ig-like C2-type domains span residues 154–246 (PWFW…AKVL) and 269–361 (PSVE…TYVL). Fibronectin type-III domains follow at residues 375 to 469 (SPLN…VMGD), 503 to 598 (PPTN…LRGP), 604 to 696 (PPAQ…VKQA), 702 to 797 (APYG…CKEW), and 804 to 899 (PPYD…LEDK). 2 consecutive Ig-like C2-type domains span residues 1120-1205 (PYFE…LDLT) and 1334-1423 (AKVV…VTIS).

As to quaternary structure, homodimer.

It is found in the cytoplasm. It localises to the myofibril. Its subcellular location is the sarcomere. The protein resides in the m line. Functionally, may link the intermediate filament cytoskeleton to the M-disk of the myofibrils in striated muscle. The polypeptide is Myomesin-3 (MYOM3) (Homo sapiens (Human)).